Consider the following 759-residue polypeptide: uncharacterized protein (759 aa).

One can recognise an MCM domain in the interval valine 352–isoleucine 556. Serine 397–serine 404 serves as a coordination point for ATP.

Belongs to the MCM family.

This is an uncharacterized protein from Methanocaldococcus jannaschii (strain ATCC 43067 / DSM 2661 / JAL-1 / JCM 10045 / NBRC 100440) (Methanococcus jannaschii).